The following is a 131-amino-acid chain: Profilin-6 (131 aa).

Cysteines 13 and 115 form a disulfide. Residues 81–97 carry the Involved in PIP2 interaction motif; the sequence is VVIRGKKGAGGITIKKT. Residue Thr111 is modified to Phosphothreonine.

Belongs to the profilin family. In terms of assembly, occurs in many kinds of cells as a complex with monomeric actin in a 1:1 ratio. Post-translationally, phosphorylated by MAP kinases.

The protein localises to the cytoplasm. The protein resides in the cytoskeleton. Its function is as follows. Binds to actin and affects the structure of the cytoskeleton. At high concentrations, profilin prevents the polymerization of actin, whereas it enhances it at low concentrations. The polypeptide is Profilin-6 (Corylus avellana (European hazel)).